Reading from the N-terminus, the 494-residue chain is Probable cytosol aminopeptidase (494 aa).

The Mn(2+) site is built by K264 and D269. Residue K276 is part of the active site. D287, D346, and E348 together coordinate Mn(2+). The active site involves R350.

It belongs to the peptidase M17 family. The cofactor is Mn(2+).

It is found in the cytoplasm. The catalysed reaction is Release of an N-terminal amino acid, Xaa-|-Yaa-, in which Xaa is preferably Leu, but may be other amino acids including Pro although not Arg or Lys, and Yaa may be Pro. Amino acid amides and methyl esters are also readily hydrolyzed, but rates on arylamides are exceedingly low.. It carries out the reaction Release of an N-terminal amino acid, preferentially leucine, but not glutamic or aspartic acids.. Functionally, presumably involved in the processing and regular turnover of intracellular proteins. Catalyzes the removal of unsubstituted N-terminal amino acids from various peptides. The polypeptide is Probable cytosol aminopeptidase (pepA) (Pasteurella multocida (strain Pm70)).